The primary structure comprises 271 residues: L-aspartate dehydrogenase (271 aa).

Residues Ala124 and Asn192 each coordinate NAD(+). Residue His222 is part of the active site.

It belongs to the L-aspartate dehydrogenase family.

The catalysed reaction is L-aspartate + NADP(+) + H2O = oxaloacetate + NH4(+) + NADPH + H(+). The enzyme catalyses L-aspartate + NAD(+) + H2O = oxaloacetate + NH4(+) + NADH + H(+). It functions in the pathway cofactor biosynthesis; NAD(+) biosynthesis; iminoaspartate from L-aspartate (dehydrogenase route): step 1/1. Functionally, specifically catalyzes the NAD or NADP-dependent dehydrogenation of L-aspartate to iminoaspartate. The polypeptide is L-aspartate dehydrogenase (Methanosarcina acetivorans (strain ATCC 35395 / DSM 2834 / JCM 12185 / C2A)).